A 250-amino-acid chain; its full sequence is Hydroxyacylglutathione hydrolase (250 aa).

7 residues coordinate Zn(2+): H52, H54, D56, H57, H107, D128, and H166.

Belongs to the metallo-beta-lactamase superfamily. Glyoxalase II family. As to quaternary structure, monomer. Requires Zn(2+) as cofactor.

It catalyses the reaction an S-(2-hydroxyacyl)glutathione + H2O = a 2-hydroxy carboxylate + glutathione + H(+). The protein operates within secondary metabolite metabolism; methylglyoxal degradation; (R)-lactate from methylglyoxal: step 2/2. Thiolesterase that catalyzes the hydrolysis of S-D-lactoyl-glutathione to form glutathione and D-lactic acid. In Neisseria gonorrhoeae (strain NCCP11945), this protein is Hydroxyacylglutathione hydrolase.